The following is a 202-amino-acid chain: MIHKYDYHKTHFLFSTSCIKNLLYNVSKEIAFTGSSNVGKSSVINTLTNQKNLARTSKKPGSTKTVNVFEVEPGVNLIDLPGYGYVTMPVALKYHWQHDLIYFLQKCTNLKGLVVLMDIRHPMKFLDKYIIQCAIENKIQVFILLNKADKMNAYACNTQYHTVQQHLSNLESNIKITLFSSVTKLGIKKLKAQLDSWFSIVS.

The region spanning 26 to 200 (VSKEIAFTGS…KAQLDSWFSI (175 aa)) is the EngB-type G domain. Residues 34–41 (GSSNVGKS), 61–65 (GSTKT), 79–82 (DLPG), 146–149 (NKAD), and 179–181 (FSS) each bind GTP. The Mg(2+) site is built by Ser41 and Thr63.

Belongs to the TRAFAC class TrmE-Era-EngA-EngB-Septin-like GTPase superfamily. EngB GTPase family. Mg(2+) serves as cofactor.

In terms of biological role, necessary for normal cell division and for the maintenance of normal septation. In Baumannia cicadellinicola subsp. Homalodisca coagulata, this protein is Probable GTP-binding protein EngB.